Here is a 264-residue protein sequence, read N- to C-terminus: Glutamate racemase (264 aa).

Substrate contacts are provided by residues 10 to 11 and 42 to 43; these read DS and YG. The active-site Proton donor/acceptor is C73. Position 74–75 (74–75) interacts with substrate; sequence NT. The active-site Proton donor/acceptor is C183. 184 to 185 lines the substrate pocket; it reads TH.

Belongs to the aspartate/glutamate racemases family.

The catalysed reaction is L-glutamate = D-glutamate. It participates in cell wall biogenesis; peptidoglycan biosynthesis. Provides the (R)-glutamate required for cell wall biosynthesis. This Streptococcus pyogenes serotype M6 (strain ATCC BAA-946 / MGAS10394) protein is Glutamate racemase.